The sequence spans 316 residues: Probable cell division protein WhiA (316 aa).

The segment at residues 275 to 309 is a DNA-binding region (H-T-H motif); that stretch reads TLKELGEMVESGKISKSGINHRLRKLDQIAEQLRN.

The protein belongs to the WhiA family.

In terms of biological role, involved in cell division and chromosome segregation. This Bacillus pumilus (strain SAFR-032) protein is Probable cell division protein WhiA.